The sequence spans 350 residues: Purine-rich element-binding protein gamma (350 aa).

2 disordered regions span residues 1-59 (MERA…GTSE) and 136-172 (GHRQ…HPHS). The segment covering 9-27 (GGGSGGGRGRGGKNVGGPG) has biased composition (gly residues). A compositionally biased stretch (polar residues) spans 47–59 (ASATPNQSGGTSE). Residues 54–296 (SGGTSEIQEL…GIFLKVSEVR (243 aa)) mediate DNA binding. The segment covering 137-149 (HRQEHGQSKEQVS) has biased composition (basic and acidic residues). Phosphoserine is present on residues S163, S166, and S342.

It belongs to the PUR DNA-binding protein family. In terms of tissue distribution, isoform 1 is expressed in testis. Isoform 2 is expressed in blastocyst and kidney.

It is found in the nucleus. This Mus musculus (Mouse) protein is Purine-rich element-binding protein gamma (Purg).